A 1709-amino-acid polypeptide reads, in one-letter code: Sialoadhesin (1709 aa).

Positions 1 to 19 are cleaved as a signal peptide; it reads MGFLPKLLLLASFFPAGQA. In terms of domain architecture, Ig-like V-type spans 20–136; the sequence is SWGVSSPQDV…DVKGTLVTVT (117 aa). Over 20–1641 the chain is Extracellular; that stretch reads SWGVSSPQDV…ALHRLHQFQQ (1622 aa). 4 disulfides stabilise this stretch: Cys36–Cys166, Cys41–Cys98, Cys160–Cys217, and Cys262–Cys305. Residues Tyr63, Arg116, and 122–126 contribute to the N-acetylneuraminate site; that span reads VNRWS. Ig-like C2-type domains lie at 139–233, 238–320, 326–405, 411–507, 511–593, 601–705, 708–785, 799–894, 898–977, 984–1083, 1085–1165, and 1176–1248; these read PRVP…IHLQ, PKGV…PPIS, AEVQ…GPVS, PPLT…LDFH, ARLL…AVLT, PTFT…ATFN, ATVL…AQLS, PKLS…FQVR, VQVS…APIS, PRHV…ADFD, QAVN…RPIT, and RLTY…SPLG. Asn159 carries N-linked (GlcNAc...) asparagine glycosylation. Residues Asn265 and Asn339 are each glycosylated (N-linked (GlcNAc...) asparagine). 2 disulfide bridges follow: Cys346/Cys390 and Cys433/Cys491. Asn499 carries N-linked (GlcNAc...) asparagine glycosylation. Intrachain disulfides connect Cys531–Cys575 and Cys624–Cys689. N-linked (GlcNAc...) asparagine glycans are attached at residues Asn697, Asn726, Asn730, and Asn741. Intrachain disulfides connect Cys729/Cys774 and Cys817/Cys876. N-linked (GlcNAc...) asparagine glycosylation occurs at Asn886. 2 cysteine pairs are disulfide-bonded: Cys916–Cys960 and Cys1005–Cys1067. Asn1104 and Asn1138 each carry an N-linked (GlcNAc...) asparagine glycan. Intrachain disulfides connect Cys1107-Cys1149 and Cys1193-Cys1241. N-linked (GlcNAc...) asparagine glycosylation is present at Asn1251. 4 consecutive Ig-like C2-type domains span residues 1259–1341, 1350–1442, 1445–1528, and 1536–1631; these read EGVR…AALQ, VLSS…RLQV, ARVV…VMLR, and PTMM…FGVR. Disulfide bonds link Cys1281/Cys1324 and Cys1367/Cys1425. 2 N-linked (GlcNAc...) asparagine glycosylation sites follow: Asn1462 and Asn1476. 2 cysteine pairs are disulfide-bonded: Cys1465-Cys1511 and Cys1554-Cys1613. The helical transmembrane segment at 1642–1662 threads the bilayer; sequence LLWVLGLLVGLLLLLLGLGAC. Residues 1663–1709 are Cytoplasmic-facing; sequence YTWRRRRVCKQSMGENSVEMAFQKETTQLIDPDAATCETSTCAPPLG.

This sequence belongs to the immunoglobulin superfamily. SIGLEC (sialic acid binding Ig-like lectin) family. In terms of assembly, interacts with TYROBP. Interacts with CLEC10A. As to expression, expressed by macrophages in various tissues. High levels are found in spleen, lymph node, perivascular macrophages in brain and lower levels in bone marrow, liver Kupffer cells and lamina propria of colon and lung. Also expressed by inflammatory macrophages in rheumatoid arthritis.

The protein resides in the cell membrane. Its subcellular location is the secreted. Functionally, macrophage-restricted adhesion molecule that mediates sialic-acid dependent binding to lymphocytes, including granulocytes, monocytes, natural killer cells, B-cells and CD8 T-cells. Plays a crucial role in limiting bacterial dissemination by engaging sialylated bacteria to promote effective phagocytosis and antigen presentation for the adaptive immune response. Mediates the uptake of various enveloped viruses via sialic acid recognition and subsequently induces the formation of intracellular compartments filled with virions (VCCs). In turn, enhances macrophage-to-T-cell transmission of several viruses including HIV-1 or SARS-CoV-2. Acts as an endocytic receptor mediating clathrin dependent endocytosis. Preferentially binds to alpha-2,3-linked sialic acid. Binds to SPN/CD43 on T-cells. May play a role in hemopoiesis. Plays a role in the inhibition of antiviral innate immune by promoting TBK1 degradation via TYROBP and TRIM27-mediated ubiquitination. (Microbial infection) Facilitates viral cytoplasmic entry into activated dendritic cells via recognition of sialylated gangliosides pesent on viral membrane. This chain is Sialoadhesin (SIGLEC1), found in Homo sapiens (Human).